The following is a 278-amino-acid chain: Glutamate racemase (278 aa).

Substrate-binding positions include 13 to 14 (DS) and 45 to 46 (YG). Catalysis depends on C76, which acts as the Proton donor/acceptor. 77-78 (NT) is a binding site for substrate. The Proton donor/acceptor role is filled by C185. 186–187 (TH) provides a ligand contact to substrate.

The protein belongs to the aspartate/glutamate racemases family.

It carries out the reaction L-glutamate = D-glutamate. Its pathway is cell wall biogenesis; peptidoglycan biosynthesis. Provides the (R)-glutamate required for cell wall biosynthesis. This Gloeothece citriformis (strain PCC 7424) (Cyanothece sp. (strain PCC 7424)) protein is Glutamate racemase.